A 341-amino-acid chain; its full sequence is AB hydrolase superfamily protein C1039.03 (341 aa).

It belongs to the AB hydrolase superfamily.

The protein resides in the cytoplasm. It localises to the nucleus. In Schizosaccharomyces pombe (strain 972 / ATCC 24843) (Fission yeast), this protein is AB hydrolase superfamily protein C1039.03.